A 509-amino-acid chain; its full sequence is ATP synthase subunit alpha (509 aa).

169–176 (GDRQTGKT) contributes to the ATP binding site.

The protein belongs to the ATPase alpha/beta chains family. In terms of assembly, F-type ATPases have 2 components, CF(1) - the catalytic core - and CF(0) - the membrane proton channel. CF(1) has five subunits: alpha(3), beta(3), gamma(1), delta(1), epsilon(1). CF(0) has three main subunits: a(1), b(2) and c(9-12). The alpha and beta chains form an alternating ring which encloses part of the gamma chain. CF(1) is attached to CF(0) by a central stalk formed by the gamma and epsilon chains, while a peripheral stalk is formed by the delta and b chains.

The protein resides in the cell inner membrane. It carries out the reaction ATP + H2O + 4 H(+)(in) = ADP + phosphate + 5 H(+)(out). Its function is as follows. Produces ATP from ADP in the presence of a proton gradient across the membrane. The alpha chain is a regulatory subunit. This Paramagnetospirillum magneticum (strain ATCC 700264 / AMB-1) (Magnetospirillum magneticum) protein is ATP synthase subunit alpha.